A 245-amino-acid polypeptide reads, in one-letter code: 1-(5-phosphoribosyl)-5-[(5-phosphoribosylamino)methylideneamino] imidazole-4-carboxamide isomerase (245 aa).

Asp-8 serves as the catalytic Proton acceptor. Asp-130 (proton donor) is an active-site residue.

It belongs to the HisA/HisF family.

The protein resides in the cytoplasm. The enzyme catalyses 1-(5-phospho-beta-D-ribosyl)-5-[(5-phospho-beta-D-ribosylamino)methylideneamino]imidazole-4-carboxamide = 5-[(5-phospho-1-deoxy-D-ribulos-1-ylimino)methylamino]-1-(5-phospho-beta-D-ribosyl)imidazole-4-carboxamide. It participates in amino-acid biosynthesis; L-histidine biosynthesis; L-histidine from 5-phospho-alpha-D-ribose 1-diphosphate: step 4/9. The protein is 1-(5-phosphoribosyl)-5-[(5-phosphoribosylamino)methylideneamino] imidazole-4-carboxamide isomerase of Pseudomonas putida (strain W619).